Consider the following 148-residue polypeptide: Hut operon positive regulatory protein (148 aa).

It belongs to the HutP family. Homohexamer.

Its function is as follows. Antiterminator that binds to cis-acting regulatory sequences on the mRNA in the presence of histidine, thereby suppressing transcription termination and activating the hut operon for histidine utilization. The protein is Hut operon positive regulatory protein of Bacillus velezensis (strain DSM 23117 / BGSC 10A6 / LMG 26770 / FZB42) (Bacillus amyloliquefaciens subsp. plantarum).